Reading from the N-terminus, the 97-residue chain is Aspartyl/glutamyl-tRNA(Asn/Gln) amidotransferase subunit C (97 aa).

A compositionally biased stretch (low complexity) spans 74-84 (TPEEATAAAPA). A disordered region spans residues 74 to 97 (TPEEATAAAPAREGTAFKVPRIIE).

Belongs to the GatC family. Heterotrimer of A, B and C subunits.

It carries out the reaction L-glutamyl-tRNA(Gln) + L-glutamine + ATP + H2O = L-glutaminyl-tRNA(Gln) + L-glutamate + ADP + phosphate + H(+). The catalysed reaction is L-aspartyl-tRNA(Asn) + L-glutamine + ATP + H2O = L-asparaginyl-tRNA(Asn) + L-glutamate + ADP + phosphate + 2 H(+). Functionally, allows the formation of correctly charged Asn-tRNA(Asn) or Gln-tRNA(Gln) through the transamidation of misacylated Asp-tRNA(Asn) or Glu-tRNA(Gln) in organisms which lack either or both of asparaginyl-tRNA or glutaminyl-tRNA synthetases. The reaction takes place in the presence of glutamine and ATP through an activated phospho-Asp-tRNA(Asn) or phospho-Glu-tRNA(Gln). This is Aspartyl/glutamyl-tRNA(Asn/Gln) amidotransferase subunit C from Anaeromyxobacter dehalogenans (strain 2CP-1 / ATCC BAA-258).